A 174-amino-acid chain; its full sequence is Glutamyl-tRNA(Gln) amidotransferase subunit F, mitochondrial (174 aa).

This sequence belongs to the GatF family. As to quaternary structure, subunit of the heterotrimeric GatFAB amidotransferase (AdT) complex, composed of A, B and F subunits.

It localises to the mitochondrion inner membrane. The enzyme catalyses L-glutamyl-tRNA(Gln) + L-glutamine + ATP + H2O = L-glutaminyl-tRNA(Gln) + L-glutamate + ADP + phosphate + H(+). Functionally, allows the formation of correctly charged Gln-tRNA(Gln) through the transamidation of misacylated Glu-tRNA(Gln) in the mitochondria. The reaction takes place in the presence of glutamine and ATP through an activated gamma-phospho-Glu-tRNA(Gln). Required for proper protein synthesis within the mitochondrion. This Kluyveromyces lactis (strain ATCC 8585 / CBS 2359 / DSM 70799 / NBRC 1267 / NRRL Y-1140 / WM37) (Yeast) protein is Glutamyl-tRNA(Gln) amidotransferase subunit F, mitochondrial.